Here is a 103-residue protein sequence, read N- to C-terminus: Large ribosomal subunit protein bL21 (103 aa).

The protein belongs to the bacterial ribosomal protein bL21 family. In terms of assembly, part of the 50S ribosomal subunit. Contacts protein L20.

Functionally, this protein binds to 23S rRNA in the presence of protein L20. The polypeptide is Large ribosomal subunit protein bL21 (Brevibacillus brevis (strain 47 / JCM 6285 / NBRC 100599)).